The sequence spans 446 residues: ATP synthase subunit b-delta (446 aa).

The ATP synthase subunit b stretch occupies residues 1-168 (MSTFIGQLFG…PATADVDYPL (168 aa)). A helical membrane pass occupies residues 4-24 (FIGQLFGFAVIVYLVWRFIVP). Positions 169–446 (LAKMRSASRR…LAAAEARLPD (278 aa)) are ATP synthase subunit delta.

The protein in the N-terminal section; belongs to the ATPase B chain family. In the C-terminal section; belongs to the ATPase delta chain family. In terms of assembly, F-type ATPases have 2 components, F(1) - the catalytic core - and F(0) - the membrane proton channel. F(1) has five subunits: alpha(3), beta(3), gamma(1), delta(1), epsilon(1). F(0) has three main subunits: a(1), b(2) and c(10-14). The alpha and beta chains form an alternating ring which encloses part of the gamma chain. F(1) is attached to F(0) by a central stalk formed by the gamma and epsilon chains, while a peripheral stalk is formed by the delta and b chains.

The protein resides in the cell membrane. In terms of biological role, f(1)F(0) ATP synthase produces ATP from ADP in the presence of a proton or sodium gradient. F-type ATPases consist of two structural domains, F(1) containing the extramembraneous catalytic core and F(0) containing the membrane proton channel, linked together by a central stalk and a peripheral stalk. During catalysis, ATP synthesis in the catalytic domain of F(1) is coupled via a rotary mechanism of the central stalk subunits to proton translocation. Its function is as follows. This fusion protein includes a component of the F(0) channel (subunit b) and of the F(1) subunit (subunit delta). Two copies of subunit b and one of delta together form the peripheral 'stator' stalk which links F(1) to F(0). The protein is ATP synthase subunit b-delta (atpFH) of Mycobacterium bovis (strain ATCC BAA-935 / AF2122/97).